Here is a 381-residue protein sequence, read N- to C-terminus: Mannose 6-phosphate receptor-like protein 1 (381 aa).

The signal sequence occupies residues 1–23; the sequence is MLKRSSLIYLSCVLIITIPILLH. Residues 24 to 236 lie on the Lumenal side of the membrane; that stretch reads VYNGPGLSHE…ACPTSNKKNE (213 aa). Disordered stretches follow at residues 33–57 and 81–104; these read EANEHRASHKQKRTLANPDKPKSEN and STPNKLREGQKQISGNNKHESSKT. Residues 61-230 enclose the MRH domain; it reads LFCAVTNPVT…EVRSIHACPT (170 aa). Cys-63 and Cys-122 are disulfide-bonded. N-linked (GlcNAc...) asparagine glycans are attached at residues Asn-116, Asn-136, Asn-178, and Asn-215. 2 disulfide bridges follow: Cys-182–Cys-216 and Cys-197–Cys-228. A helical membrane pass occupies residues 237-257; that stretch reads VNVLGIFIGIFAIFFLVEFAG. The Cytoplasmic segment spans residues 258–381; that stretch reads RRWIYAKLNR…DHPTLADNSV (124 aa). Residues Ser-335, Ser-339, Ser-342, Ser-371, and Ser-380 each carry the phosphoserine modification. A disordered region spans residues 360–381; sequence DSLDINSHTTESDHPTLADNSV.

It belongs to the MRL1/IGF2R family.

It localises to the golgi apparatus. It is found in the trans-Golgi network membrane. The protein resides in the endosome membrane. Sorting receptor involved in the transport of vacuolar enzymes from the Golgi complex to the vacuole. Involved in the delivery and maturation of PEP4 (vacuolar proteinase A) and PRB1 (vacuolar proteinase B). In Saccharomyces cerevisiae (strain ATCC 204508 / S288c) (Baker's yeast), this protein is Mannose 6-phosphate receptor-like protein 1 (MRL1).